A 735-amino-acid polypeptide reads, in one-letter code: Lebercilin-like protein (735 aa).

Disordered stretches follow at residues 12 to 54 (TEAH…NGSV) and 91 to 115 (EKPL…RGQK). The segment covering 43–53 (QSQNSQASNGS) has biased composition (low complexity). A coiled-coil region spans residues 205–335 (TAKHQNEVKN…QQKLKEKDRE (131 aa)). Disordered regions lie at residues 356–379 (YPKV…NMRH), 473–597 (SKEV…PRKH), 632–657 (KHRS…AGAR), and 685–735 (GRAG…KTVV). The span at 487 to 525 (TPRRPKENKEDQEKRAIPAEAEPTAKESEAHKDAEDKAL) shows a compositional bias: basic and acidic residues. Residues 528 to 541 (AAGNAGDAGDAGDA) are compositionally biased toward low complexity. Basic and acidic residues-rich tracts occupy residues 542–553 (GNDREVVGEHKV), 573–588 (EVHG…EPGR), and 632–641 (KHRSEQELRL). Polar residues predominate over residues 689-707 (SSDSEAVSKSPQTGPQASA).

The protein belongs to the LCA5 family.

This is Lebercilin-like protein from Mus musculus (Mouse).